The following is a 406-amino-acid chain: Tyrosine--tRNA ligase (406 aa).

Tyr35 serves as a coordination point for L-tyrosine. Positions 40-49 (PTADSLHVGH) match the 'HIGH' region motif. L-tyrosine-binding residues include Tyr168 and Gln172. The short motif at 228 to 232 (KMGKT) is the 'KMSKS' region element. ATP is bound at residue Lys231. In terms of domain architecture, S4 RNA-binding spans 340 to 404 (SELLDILVEA…RGKKNYNKIV (65 aa)).

This sequence belongs to the class-I aminoacyl-tRNA synthetase family. TyrS type 1 subfamily. In terms of assembly, homodimer.

The protein resides in the cytoplasm. It carries out the reaction tRNA(Tyr) + L-tyrosine + ATP = L-tyrosyl-tRNA(Tyr) + AMP + diphosphate + H(+). Catalyzes the attachment of tyrosine to tRNA(Tyr) in a two-step reaction: tyrosine is first activated by ATP to form Tyr-AMP and then transferred to the acceptor end of tRNA(Tyr). This is Tyrosine--tRNA ligase from Clostridium perfringens (strain ATCC 13124 / DSM 756 / JCM 1290 / NCIMB 6125 / NCTC 8237 / Type A).